We begin with the raw amino-acid sequence, 81 residues long: Acylphosphatase (81 aa).

The Acylphosphatase-like domain maps to Met1–Tyr81. Active-site residues include Arg14 and Asn32.

This sequence belongs to the acylphosphatase family.

It carries out the reaction an acyl phosphate + H2O = a carboxylate + phosphate + H(+). In Picrophilus torridus (strain ATCC 700027 / DSM 9790 / JCM 10055 / NBRC 100828 / KAW 2/3), this protein is Acylphosphatase (acyP).